The chain runs to 672 residues: MSKTFKLHSAFQPSGDQPEAIRRLEEGLEDGLAHQTLLGVTGSGKTFTIANVIADLNRPTMVMAPNKTLAAQLYGEMKQFFPENAVEYFVSYYDYYQPEAYVPSSDTFIEKDASVNEHIEQMRLSATKALLERRDVVVVASVSAIYGLGDPDLYLKMMLHLTQGMLIDQRSILRRLSELQYVRNDQAFARGTFRVRGEVIDIFPAEADDEALRVELFDDEVERLSLFDPLTGQLLRTVPRFTVYPKTHYVTPRERILQAMEAIRAELAMRRQSLLASNKLLEEQRLAQRTQFDLEMMNELGYCSGIENYSRYLSGRGPGEPPPTLFDYLPADGLLVIDESHVTIPQIGGMYRGDRARKETLVEYGFRLPSALDNRPLRFEEFEALAPQTIYVSATPGNYELDKSGGEVIDQVVRPTGLLDPLIEVRPVATQVDDLLSEINLRAAIGERVLVTTLTKRMAEDLTEYLEEHGVRVRYLHSDIDTVERMEIIRDLRLGEFDALVGINLLREGLDMPEVSLVAILDADKEGFLRSERSLIQTIGRAARNLNGKAILYADKITPSMARAIGETERRRERQQAFNLAHGITPQALNKKVTDILQLGDGPVRSRTKGARGQRAAEPHPDYHTLSAKQIEQQIQRLETQMYQHAQNLEFEQAAALRDEIHILREQFKNAS.

The region spanning 26 to 183 (EGLEDGLAHQ…RRLSELQYVR (158 aa)) is the Helicase ATP-binding domain. An ATP-binding site is contributed by 39–46 (GVTGSGKT). A Beta-hairpin motif is present at residues 92 to 115 (YYDYYQPEAYVPSSDTFIEKDASV). The 167-residue stretch at 431 to 597 (QVDDLLSEIN…ALNKKVTDIL (167 aa)) folds into the Helicase C-terminal domain. The segment at 601 to 623 (DGPVRSRTKGARGQRAAEPHPDY) is disordered. Positions 632–667 (EQQIQRLETQMYQHAQNLEFEQAAALRDEIHILREQ) constitute a UVR domain.

The protein belongs to the UvrB family. Forms a heterotetramer with UvrA during the search for lesions. Interacts with UvrC in an incision complex.

It is found in the cytoplasm. Functionally, the UvrABC repair system catalyzes the recognition and processing of DNA lesions. A damage recognition complex composed of 2 UvrA and 2 UvrB subunits scans DNA for abnormalities. Upon binding of the UvrA(2)B(2) complex to a putative damaged site, the DNA wraps around one UvrB monomer. DNA wrap is dependent on ATP binding by UvrB and probably causes local melting of the DNA helix, facilitating insertion of UvrB beta-hairpin between the DNA strands. Then UvrB probes one DNA strand for the presence of a lesion. If a lesion is found the UvrA subunits dissociate and the UvrB-DNA preincision complex is formed. This complex is subsequently bound by UvrC and the second UvrB is released. If no lesion is found, the DNA wraps around the other UvrB subunit that will check the other stand for damage. The polypeptide is UvrABC system protein B (Edwardsiella ictaluri (strain 93-146)).